The following is a 37-amino-acid chain: Large ribosomal subunit protein bL36 (37 aa).

The protein belongs to the bacterial ribosomal protein bL36 family.

The polypeptide is Large ribosomal subunit protein bL36 (Leptospira interrogans serogroup Icterohaemorrhagiae serovar Lai (strain 56601)).